The following is a 300-amino-acid chain: tRNA dimethylallyltransferase (300 aa).

Residue 18–25 participates in ATP binding; sequence GPTATGKS. Position 20–25 (20–25) interacts with substrate; sequence TATGKS. Residues 43–46 form an interaction with substrate tRNA region; the sequence is DSRQ.

It belongs to the IPP transferase family. In terms of assembly, monomer. Mg(2+) serves as cofactor.

It catalyses the reaction adenosine(37) in tRNA + dimethylallyl diphosphate = N(6)-dimethylallyladenosine(37) in tRNA + diphosphate. Catalyzes the transfer of a dimethylallyl group onto the adenine at position 37 in tRNAs that read codons beginning with uridine, leading to the formation of N6-(dimethylallyl)adenosine (i(6)A). The protein is tRNA dimethylallyltransferase of Cyanothece sp. (strain PCC 7425 / ATCC 29141).